The following is a 384-amino-acid chain: Sensor-like histidine kinase SenX3 (384 aa).

A Histidine kinase domain is found at 153 to 369 (NVSHELKTPV…TFTLSIPEYP (217 aa)). A Phosphohistidine; by autocatalysis modification is found at His156. Residues 360 to 384 (TFTLSIPEYPDPESHSDEREDQRER) are disordered. A compositionally biased stretch (basic and acidic residues) spans 371-384 (PESHSDEREDQRER).

Autophosphorylated.

It localises to the cell membrane. The catalysed reaction is ATP + protein L-histidine = ADP + protein N-phospho-L-histidine.. In terms of biological role, member of the two-component regulatory system SenX3/RegX3 involved in stress response. The system is involved in phosphate starvation response. Probably exhibits a dual role as a phosphatase or a phosphodonor for the response regulator RegX3, depending upon phosphate availability. When environmental phosphate is abundant, SenX3 is required to maintain RegX3 in an unphosphorylated state, where it is unable to bind target DNA. Under conditions of phosphate limitation, SenX3 autophosphorylates and then transfers the phosphate group to RegX3. Probably does not itself sense phosphate concentrations, which may be relayed to SenX3 by the PstSCAB phosphate transporter system. In Mycolicibacterium smegmatis (strain ATCC 700084 / mc(2)155) (Mycobacterium smegmatis), this protein is Sensor-like histidine kinase SenX3.